Here is a 209-residue protein sequence, read N- to C-terminus: NADH-ubiquinone oxidoreductase subunit 9 (209 aa).

This sequence belongs to the complex I 30 kDa subunit family. In terms of assembly, complex I is composed of about 30 different subunits.

The protein localises to the mitochondrion inner membrane. It catalyses the reaction a ubiquinone + NADH + 5 H(+)(in) = a ubiquinol + NAD(+) + 4 H(+)(out). Functionally, core subunit of the mitochondrial membrane respiratory chain NADH dehydrogenase (Complex I) that is believed to belong to the minimal assembly required for catalysis. Complex I functions in the transfer of electrons from NADH to the respiratory chain. The immediate electron acceptor for the enzyme is believed to be ubiquinone. The protein is NADH-ubiquinone oxidoreductase subunit 9 (NAD9) of Paramecium primaurelia.